Consider the following 119-residue polypeptide: Protein TusC (119 aa).

It belongs to the DsrF/TusC family. In terms of assembly, heterohexamer, formed by a dimer of trimers. The hexameric TusBCD complex contains 2 copies each of TusB, TusC and TusD. The TusBCD complex interacts with TusE.

It is found in the cytoplasm. Part of a sulfur-relay system required for 2-thiolation of 5-methylaminomethyl-2-thiouridine (mnm(5)s(2)U) at tRNA wobble positions. The chain is Protein TusC from Escherichia coli O8 (strain IAI1).